Reading from the N-terminus, the 552-residue chain is Putative acetolactate synthase large subunit IlvB2 (552 aa).

A thiamine diphosphate-binding site is contributed by Glu-48. Residues 262-285 (FGDG…VGVS) and 309-328 (DPDP…ITTS) contribute to the FAD site. The thiamine pyrophosphate binding stretch occupies residues 394–474 (TCISWTFRGI…VTWAVLNDGQ (81 aa)). Residue Asp-445 coordinates Mg(2+).

The protein belongs to the TPP enzyme family. Heterodimer of large catalytic subunit and small regulatory subunit. Mg(2+) serves as cofactor. It depends on thiamine diphosphate as a cofactor.

It catalyses the reaction 2 pyruvate + H(+) = (2S)-2-acetolactate + CO2. It participates in amino-acid biosynthesis; L-isoleucine biosynthesis; L-isoleucine from 2-oxobutanoate: step 1/4. The protein operates within amino-acid biosynthesis; L-valine biosynthesis; L-valine from pyruvate: step 1/4. In terms of biological role, catalyzes the conversion of 2 pyruvate molecules into acetolactate in the first common step of the biosynthetic pathway of the branched-amino acids such as leucine, isoleucine, and valine. In Mycobacterium tuberculosis (strain ATCC 25618 / H37Rv), this protein is Putative acetolactate synthase large subunit IlvB2 (ilvB2).